The chain runs to 818 residues: Serine/threonine-protein kinase PTK2/STK2 (818 aa).

Residues 28–39 (NSSSHTDNSSLL) show a composition bias toward polar residues. Disordered regions lie at residues 28 to 100 (NSSS…GSVS) and 117 to 177 (NPYL…SHHF). Thr56 bears the Phosphothreonine mark. A compositionally biased stretch (low complexity) spans 57 to 81 (SPSISGSGSGGNSPSSSAGARQRSA). A phosphoserine mark is found at Ser59 and Ser80. The segment covering 136 to 160 (TRDRDRAVLDREKEKERARNKERNT) has biased composition (basic and acidic residues). The Protein kinase domain occupies 255-562 (DTDNKPIGSG…MDDLFNDPFF (308 aa)). ATP is bound by residues 261-269 (IGSGGSSEV) and Lys285. Catalysis depends on Asp388, which acts as the Proton acceptor. Polar residues predominate over residues 585–595 (STSTNDFSENS). The tract at residues 585–795 (STSTNDFSEN…SVSSSKKKKV (211 aa)) is disordered. Phosphoserine is present on residues Ser623 and Ser632. Composition is skewed to basic and acidic residues over residues 638 to 651 (KVKD…HDVG) and 659 to 685 (TKPK…KVIE). A Phosphoserine modification is found at Ser694. Thr700 carries the phosphothreonine modification. Ser711 is subject to Phosphoserine. The span at 727 to 736 (TPTTPTHNGP) shows a compositional bias: low complexity. A Phosphothreonine modification is found at Thr737. 4 positions are modified to phosphoserine: Ser752, Ser755, Ser778, and Ser781. The segment covering 755–767 (SLKSETPASTKNF) has biased composition (polar residues). The span at 768-789 (SAPNVSSSSNSLRSLGSPSVSS) shows a compositional bias: low complexity.

Belongs to the protein kinase superfamily. Ser/Thr protein kinase family.

It localises to the nucleus. The protein resides in the cytoplasm. It catalyses the reaction L-seryl-[protein] + ATP = O-phospho-L-seryl-[protein] + ADP + H(+). The catalysed reaction is L-threonyl-[protein] + ATP = O-phospho-L-threonyl-[protein] + ADP + H(+). Its function is as follows. Essential determinant for high-affinity spermidine transport. Required for the activation of the plasma membrane proton pump PMA1 via phosphorylation of 'Ser-899'. The sequence is that of Serine/threonine-protein kinase PTK2/STK2 (PTK2) from Saccharomyces cerevisiae (strain ATCC 204508 / S288c) (Baker's yeast).